The chain runs to 167 residues: GTP-dependent dephospho-CoA kinase (167 aa).

GTP is bound by residues D39, V41, D58, K60, and E117.

It belongs to the GTP-dependent DPCK family.

The enzyme catalyses 3'-dephospho-CoA + GTP = GDP + CoA + H(+). It participates in cofactor biosynthesis; coenzyme A biosynthesis. Functionally, catalyzes the GTP-dependent phosphorylation of the 3'-hydroxyl group of dephosphocoenzyme A to form coenzyme A (CoA). The sequence is that of GTP-dependent dephospho-CoA kinase from Korarchaeum cryptofilum (strain OPF8).